The following is a 773-amino-acid chain: ATP-dependent RNA helicase MAK5 (773 aa).

Residues K73–D82 show a composition bias toward basic and acidic residues. 2 disordered regions span residues K73 to L99 and S114 to D144. Acidic residues predominate over residues D83–L99. T135 bears the Phosphothreonine mark. Position 138 is a phosphoserine (S138). Positions E171 to K199 match the Q motif motif. In terms of domain architecture, Helicase ATP-binding spans I202–R399. A215–T222 contributes to the ATP binding site. The DEAD box motif lies at D333 to D336. Residues D452–N615 form the Helicase C-terminal domain. The residue at position 678 (S678) is a Phosphoserine.

This sequence belongs to the DEAD box helicase family. DDX24/MAK5 subfamily.

It localises to the nucleus. The protein resides in the nucleolus. It carries out the reaction ATP + H2O = ADP + phosphate + H(+). Its function is as follows. ATP-binding RNA helicase involved in the biogenesis of 60S ribosomal subunits and is required for the normal formation of 25S and 5.8S rRNAs. Required for the maintenance of dsRNA killer plasmid. In Saccharomyces cerevisiae (strain ATCC 204508 / S288c) (Baker's yeast), this protein is ATP-dependent RNA helicase MAK5 (MAK5).